We begin with the raw amino-acid sequence, 208 residues long: Uracil phosphoribosyltransferase (208 aa).

5-phospho-alpha-D-ribose 1-diphosphate is bound by residues Arg-78, Arg-103, and 130–138 (DPMLATGGS). Uracil is bound by residues Ile-193 and 198 to 200 (GDA). A 5-phospho-alpha-D-ribose 1-diphosphate-binding site is contributed by Asp-199.

This sequence belongs to the UPRTase family. Requires Mg(2+) as cofactor.

It carries out the reaction UMP + diphosphate = 5-phospho-alpha-D-ribose 1-diphosphate + uracil. It participates in pyrimidine metabolism; UMP biosynthesis via salvage pathway; UMP from uracil: step 1/1. With respect to regulation, allosterically activated by GTP. Functionally, catalyzes the conversion of uracil and 5-phospho-alpha-D-ribose 1-diphosphate (PRPP) to UMP and diphosphate. This chain is Uracil phosphoribosyltransferase, found in Acholeplasma laidlawii (strain PG-8A).